The primary structure comprises 586 residues: Clathrin heavy chain linker domain-containing protein 1 (586 aa).

A coiled-coil region spans residues methionine 174 to glutamine 232.

The polypeptide is Clathrin heavy chain linker domain-containing protein 1 (CLHC1) (Macaca fascicularis (Crab-eating macaque)).